Reading from the N-terminus, the 344-residue chain is Tryptophan--tRNA ligase (344 aa).

Residues 20–22 (QPS) and 28–29 (GN) each bind ATP. Positions 21-29 (PSGALHLGN) match the 'HIGH' region motif. D144 is a binding site for L-tryptophan. Residues 156 to 158 (GED), V197, and 206 to 210 (KMSKS) each bind ATP. A 'KMSKS' region motif is present at residues 206-210 (KMSKS).

Belongs to the class-I aminoacyl-tRNA synthetase family. In terms of assembly, homodimer.

The protein resides in the cytoplasm. The enzyme catalyses tRNA(Trp) + L-tryptophan + ATP = L-tryptophyl-tRNA(Trp) + AMP + diphosphate + H(+). Catalyzes the attachment of tryptophan to tRNA(Trp). The protein is Tryptophan--tRNA ligase of Caulobacter vibrioides (strain ATCC 19089 / CIP 103742 / CB 15) (Caulobacter crescentus).